The following is a 255-amino-acid chain: Imidazole glycerol phosphate synthase subunit HisF (255 aa).

Residues Asp11 and Asp130 contribute to the active site.

It belongs to the HisA/HisF family. Heterodimer of HisH and HisF.

Its subcellular location is the cytoplasm. The catalysed reaction is 5-[(5-phospho-1-deoxy-D-ribulos-1-ylimino)methylamino]-1-(5-phospho-beta-D-ribosyl)imidazole-4-carboxamide + L-glutamine = D-erythro-1-(imidazol-4-yl)glycerol 3-phosphate + 5-amino-1-(5-phospho-beta-D-ribosyl)imidazole-4-carboxamide + L-glutamate + H(+). It participates in amino-acid biosynthesis; L-histidine biosynthesis; L-histidine from 5-phospho-alpha-D-ribose 1-diphosphate: step 5/9. Its function is as follows. IGPS catalyzes the conversion of PRFAR and glutamine to IGP, AICAR and glutamate. The HisF subunit catalyzes the cyclization activity that produces IGP and AICAR from PRFAR using the ammonia provided by the HisH subunit. In Rhodopseudomonas palustris (strain BisA53), this protein is Imidazole glycerol phosphate synthase subunit HisF.